A 355-amino-acid polypeptide reads, in one-letter code: UDP-N-acetylglucosamine--N-acetylmuramyl-(pentapeptide) pyrophosphoryl-undecaprenol N-acetylglucosamine transferase (355 aa).

UDP-N-acetyl-alpha-D-glucosamine contacts are provided by residues 15–17, Asn127, Arg163, Ser191, Ile244, 263–268, and Gln288; these read TGG and ALTVSE.

This sequence belongs to the glycosyltransferase 28 family. MurG subfamily.

The protein resides in the cell inner membrane. It carries out the reaction di-trans,octa-cis-undecaprenyl diphospho-N-acetyl-alpha-D-muramoyl-L-alanyl-D-glutamyl-meso-2,6-diaminopimeloyl-D-alanyl-D-alanine + UDP-N-acetyl-alpha-D-glucosamine = di-trans,octa-cis-undecaprenyl diphospho-[N-acetyl-alpha-D-glucosaminyl-(1-&gt;4)]-N-acetyl-alpha-D-muramoyl-L-alanyl-D-glutamyl-meso-2,6-diaminopimeloyl-D-alanyl-D-alanine + UDP + H(+). It participates in cell wall biogenesis; peptidoglycan biosynthesis. Its function is as follows. Cell wall formation. Catalyzes the transfer of a GlcNAc subunit on undecaprenyl-pyrophosphoryl-MurNAc-pentapeptide (lipid intermediate I) to form undecaprenyl-pyrophosphoryl-MurNAc-(pentapeptide)GlcNAc (lipid intermediate II). This is UDP-N-acetylglucosamine--N-acetylmuramyl-(pentapeptide) pyrophosphoryl-undecaprenol N-acetylglucosamine transferase from Salmonella gallinarum (strain 287/91 / NCTC 13346).